The chain runs to 177 residues: Parathyroid hormone-related protein (177 aa).

Positions 1–24 (MLWRLVQQWSVAVFLLSYSVPSCG) are cleaved as a signal peptide. A propeptide spanning residues 25-34 (RSVEELGRRL) is cleaved from the precursor. The important for receptor binding stretch occupies residues 57–68 (RFFLHHLIAEIH). The interval 74-149 (ATSEVSPNSK…KRRTRSAWLT (76 aa)) is disordered. A compositionally biased stretch (polar residues) spans 76 to 90 (SEVSPNSKPAPNTKN). The Nuclear localization signal signature appears at 108–129 (TNKVETYKEQPLKTPGKKKKSK). Positions 109–118 (NKVETYKEQP) are enriched in basic and acidic residues. The span at 122-132 (PGKKKKSKPGK) shows a compositional bias: basic residues.

The protein belongs to the parathyroid hormone family. In terms of assembly, PTHrP interacts with PTH1R (via N-terminal extracellular domain). There are several secretory forms, including osteostatin, arising from endoproteolytic cleavage of the initial translation product. Each of these secretory forms is believed to have one or more of its own receptors that mediates the normal paracrine, autocrine and endocrine actions.

The protein resides in the secreted. It is found in the cytoplasm. The protein localises to the nucleus. Functionally, neuroendocrine peptide which is a critical regulator of cellular and organ growth, development, migration, differentiation and survival and of epithelial calcium ion transport. Acts by binding to its receptor, PTH1R, activating G protein-coupled receptor signaling. Regulates endochondral bone development and epithelial-mesenchymal interactions during the formation of the mammary glands and teeth. Required for skeletal homeostasis. Promotes mammary mesenchyme differentiation and bud outgrowth by modulating mesenchymal cell responsiveness to BMPs. Up-regulates BMPR1A expression in the mammary mesenchyme and this increases the sensitivity of these cells to BMPs and allows them to respond to BMP4 in a paracrine and/or autocrine fashion. BMP4 signaling in the mesenchyme, in turn, triggers epithelial outgrowth and augments MSX2 expression, which causes the mammary mesenchyme to inhibit hair follicle formation within the nipple sheath. In terms of biological role, potent inhibitor of osteoclastic bone resorption. The polypeptide is Parathyroid hormone-related protein (PTHLH) (Bos taurus (Bovine)).